The following is a 279-amino-acid chain: Putative potassium channel regulatory protein (279 aa).

The BTB domain maps to 5–74 (ELVTLNVGGM…VRTSQLSLPS (70 aa)). The tract at residues 256–279 (ENSRQENYETETVQVKQAKPNKKR) is disordered.

It is found in the endoplasmic reticulum. Functionally, inhibits potassium fluxes in cells, possibly by retaining potassium channels in the cytoplasm. This chain is Putative potassium channel regulatory protein (kcnrg), found in Xenopus tropicalis (Western clawed frog).